A 293-amino-acid polypeptide reads, in one-letter code: AKT-interacting protein (293 aa).

Residues M1–S11 show a composition bias toward polar residues. Positions M1–T63 are disordered. The segment covering K14–L23 has biased composition (basic and acidic residues). The residue at position 30 (S30) is a Phosphoserine. The UBC core domain maps to Y74 to A222. A compositionally biased stretch (basic and acidic residues) spans M253–N265. The segment at M253 to T293 is disordered.

It belongs to the ubiquitin-conjugating enzyme family. FTS subfamily. As to quaternary structure, component of the FTS/Hook/FHIP complex (FHF complex), composed of AKTIP/FTS, FHIP1B, and one or more members of the Hook family of proteins HOOK1, HOOK2, and HOOK3. Interacts directly with HOOK1, HOOK2 and HOOK3. The FHF complex associates with the homotypic vesicular sorting complex (the HOPS complex). Also interacts with AKT1. May interact with FHIP1A.

Its subcellular location is the cytoplasm. It localises to the cell membrane. Component of the FTS/Hook/FHIP complex (FHF complex). The FHF complex may function to promote vesicle trafficking and/or fusion via the homotypic vesicular protein sorting complex (the HOPS complex). Regulates apoptosis by enhancing phosphorylation and activation of AKT1. Increases release of TNFSF6 via the AKT1/GSK3B/NFATC1 signaling cascade. FHF complex promotes the distribution of AP-4 complex to the perinuclear area of the cell. In Pongo abelii (Sumatran orangutan), this protein is AKT-interacting protein (AKTIP).